The sequence spans 585 residues: UvrABC system protein C (585 aa).

One can recognise a GIY-YIG domain in the interval 15–90 (AEPGVYQFLE…IKRHQPRYNV (76 aa)). The region spanning 198 to 233 (GILADPLRQEMQAAATAEEFERAANIRDRLAVIESF) is the UVR domain.

This sequence belongs to the UvrC family. As to quaternary structure, interacts with UvrB in an incision complex.

The protein resides in the cytoplasm. The UvrABC repair system catalyzes the recognition and processing of DNA lesions. UvrC both incises the 5' and 3' sides of the lesion. The N-terminal half is responsible for the 3' incision and the C-terminal half is responsible for the 5' incision. The sequence is that of UvrABC system protein C from Haloquadratum walsbyi (strain DSM 16790 / HBSQ001).